The sequence spans 351 residues: Alternative oxidase, mitochondrial (351 aa).

A helical transmembrane segment spans residues Leu147 to Leu167. The Fe cation site is built by Glu154, Glu193, and His196. A helical membrane pass occupies residues Leu212–Ser232. Residues Glu244, Glu245, Glu299, and His302 each coordinate Fe cation. The tract at residues Ala322 to Ile351 is disordered.

It belongs to the alternative oxidase family. It depends on Fe cation as a cofactor.

Its subcellular location is the mitochondrion inner membrane. In terms of biological role, catalyzes cyanide-resistant oxygen consumption. May increase respiration when the cytochrome respiratory pathway is restricted, or in response to low temperatures. The chain is Alternative oxidase, mitochondrial (aox1) from Aspergillus niger.